We begin with the raw amino-acid sequence, 285 residues long: Hydroxyethylthiazole kinase 1 (285 aa).

Met48 contacts substrate. Residues Arg124 and Ser183 each coordinate ATP. Residue Gly210 participates in substrate binding.

Belongs to the Thz kinase family. The cofactor is Mg(2+).

It carries out the reaction 5-(2-hydroxyethyl)-4-methylthiazole + ATP = 4-methyl-5-(2-phosphooxyethyl)-thiazole + ADP + H(+). Its pathway is cofactor biosynthesis; thiamine diphosphate biosynthesis; 4-methyl-5-(2-phosphoethyl)-thiazole from 5-(2-hydroxyethyl)-4-methylthiazole: step 1/1. In terms of biological role, catalyzes the phosphorylation of the hydroxyl group of 4-methyl-5-beta-hydroxyethylthiazole (THZ). This is Hydroxyethylthiazole kinase 1 from Methanosphaera stadtmanae (strain ATCC 43021 / DSM 3091 / JCM 11832 / MCB-3).